A 1172-amino-acid chain; its full sequence is Serine/threonine-protein kinase Nek10 (1172 aa).

The ARM repeat unit spans residues 209–251 (GAHKTLVNLLGARDTNVLLGSLLALASLAESQECREKISELNI). Residues 481 to 514 (YEELVSKLNLLVEDELKQIAENIESINQNKAPLK) adopt a coiled-coil conformation. The Protein kinase domain occupies 519–712 (YAILDHLGSG…SEPYGEKADV (194 aa)). ATP-binding positions include 525–533 (LGSGAFGCV) and Lys-548. The active-site Proton acceptor is Asp-655. Disordered stretches follow at residues 855–875 (SELS…YGKD) and 898–954 (TYSE…GSRP). Residues 919–945 (PLKESTFNILKRSFSASGGERQSQTRD) are compositionally biased toward polar residues.

It belongs to the protein kinase superfamily. NEK Ser/Thr protein kinase family. NIMA subfamily. In terms of assembly, interacts with RAF1 and MAP2K1; the interaction is direct with RAF1 and required for ERK1/2-signaling pathway activation in response to UV irradiation. Requires Mg(2+) as cofactor. As to expression, expressed in the lung.

The catalysed reaction is L-seryl-[protein] + ATP = O-phospho-L-seryl-[protein] + ADP + H(+). It carries out the reaction L-threonyl-[protein] + ATP = O-phospho-L-threonyl-[protein] + ADP + H(+). Functionally, plays a role in the cellular response to UV irradiation. Mediates G2/M cell cycle arrest, MEK autoactivation and ERK1/2-signaling pathway activation in response to UV irradiation. In ciliated cells of airways, it is involved in the regulation of mucociliary transport. In Homo sapiens (Human), this protein is Serine/threonine-protein kinase Nek10.